A 51-amino-acid polypeptide reads, in one-letter code: uncharacterized protein (51 aa).

This is an uncharacterized protein from Thermoproteus tenax virus 1 (strain KRA1) (TTV1).